Consider the following 417-residue polypeptide: MAERVVLAYSGGLDTSVGIGWLKDATGKEVVALAVDVGQGGEDMEVIRQRALDCGAVEAVVVDAKDEFADDYIVPALKANALYQKRYPLVSGLSRPLIAKHLARVAHELGANSVAHGCTGKGNDQVRFEAAVAALAPDLTSIAPVRDLALTRDKAIVYANEHDLPIEQSKKSPYSIDKNVWGRAVETGFLEDPWNGPIEDLYEYTQDPDVLREATEVTITFEAGVPVAIDGIRYSPLRIVQELNAAAGAHGIGRIDVVEDRLVGIKSREVYEAPAAMTLIEAHEELEALTIERDLGRYKRGVEKDWANLVYDGLWFSGLKRSLDAFIEDSQRHVSGDIRMTLRGGRAVVTGRRSETSLYDFDLATYDTGDTFDQSLSKGFIELWSLPSKISARRDLAVEQAALAADDATPAAAPAAE.

Position 8–16 (8–16 (AYSGGLDTS)) interacts with ATP. Residue Y87 participates in L-citrulline binding. G117 is an ATP binding site. L-aspartate contacts are provided by T119, N123, and D124. Position 123 (N123) interacts with L-citrulline. 4 residues coordinate L-citrulline: R127, S175, E259, and Y271.

This sequence belongs to the argininosuccinate synthase family. Type 1 subfamily. In terms of assembly, homotetramer.

Its subcellular location is the cytoplasm. It catalyses the reaction L-citrulline + L-aspartate + ATP = 2-(N(omega)-L-arginino)succinate + AMP + diphosphate + H(+). Its pathway is amino-acid biosynthesis; L-arginine biosynthesis; L-arginine from L-ornithine and carbamoyl phosphate: step 2/3. This chain is Argininosuccinate synthase, found in Clavibacter sepedonicus (Clavibacter michiganensis subsp. sepedonicus).